The sequence spans 168 residues: MFIIAESNQLYLGDMLFYLVSFLIMAALVWHFAWKPVTQMMQKRADKIANDIDSAAQSREEAQKLAAKRQEELKGSRQEAARIVDNAKQAGESQRAEIIATAQQDAQNLKNQAQKDAEQARQDALRGAKKDIANLSIEIASKLIHKQLNADDQQALIDTYIEGLVKHE.

The helical transmembrane segment at 10-30 threads the bilayer; it reads LYLGDMLFYLVSFLIMAALVW. Residues 61 to 80 form a disordered region; it reads EAQKLAAKRQEELKGSRQEA.

It belongs to the ATPase B chain family. F-type ATPases have 2 components, F(1) - the catalytic core - and F(0) - the membrane proton channel. F(1) has five subunits: alpha(3), beta(3), gamma(1), delta(1), epsilon(1). F(0) has three main subunits: a(1), b(2) and c(10-14). The alpha and beta chains form an alternating ring which encloses part of the gamma chain. F(1) is attached to F(0) by a central stalk formed by the gamma and epsilon chains, while a peripheral stalk is formed by the delta and b chains.

The protein localises to the cell membrane. Functionally, f(1)F(0) ATP synthase produces ATP from ADP in the presence of a proton or sodium gradient. F-type ATPases consist of two structural domains, F(1) containing the extramembraneous catalytic core and F(0) containing the membrane proton channel, linked together by a central stalk and a peripheral stalk. During catalysis, ATP synthesis in the catalytic domain of F(1) is coupled via a rotary mechanism of the central stalk subunits to proton translocation. Component of the F(0) channel, it forms part of the peripheral stalk, linking F(1) to F(0). The polypeptide is ATP synthase subunit b (Limosilactobacillus fermentum (strain NBRC 3956 / LMG 18251) (Lactobacillus fermentum)).